A 661-amino-acid chain; its full sequence is Pumilio domain-containing protein C56F2.08c (661 aa).

Residues 1–74 form the RRM domain; it reads MLYVSNLPVG…GPVQVMLAKP (74 aa). At Ser102 the chain carries Phosphoserine. Thr104 bears the Phosphothreonine mark. Phosphoserine is present on Ser105. The PUM-HD domain occupies 129-482; that stretch reads INLDIVDSMI…RLMEEVGMTS (354 aa). Pumilio repeat units lie at residues 191 to 226, 227 to 263, 264 to 302, and 374 to 410; these read SMLDDVAELSSDYLGNTVVQKFFEYCSDPIKEAMLE, RIAPYLAAIGIHKNGTWAAQKIIDVASTEKQMDLIVK, HLRPYTALLYFDQFGNYVAQCCLRFKYPKNTFLFEVMAR, and HLATHLHTTCTHKLASTLIFKLINNKQEPESRNLLLK. Phosphoserine occurs at positions 482, 486, 488, and 490.

The protein localises to the cytoplasm. The polypeptide is Pumilio domain-containing protein C56F2.08c (Schizosaccharomyces pombe (strain 972 / ATCC 24843) (Fission yeast)).